The primary structure comprises 192 residues: UPF0301 protein Bamb_0737 (192 aa).

The protein belongs to the UPF0301 (AlgH) family.

This is UPF0301 protein Bamb_0737 from Burkholderia ambifaria (strain ATCC BAA-244 / DSM 16087 / CCUG 44356 / LMG 19182 / AMMD) (Burkholderia cepacia (strain AMMD)).